The chain runs to 242 residues: Octanoyltransferase (242 aa).

A BPL/LPL catalytic domain is found at 31–206; the sequence is SQTTDEIWFL…LFLKNFGYNQ (176 aa). Substrate contacts are provided by residues 70–77, 137–139, and 150–152; these read RGGQVTYH, SIG, and GLA. The active-site Acyl-thioester intermediate is the cysteine 168.

Belongs to the LipB family.

Its subcellular location is the cytoplasm. The catalysed reaction is octanoyl-[ACP] + L-lysyl-[protein] = N(6)-octanoyl-L-lysyl-[protein] + holo-[ACP] + H(+). Its pathway is protein modification; protein lipoylation via endogenous pathway; protein N(6)-(lipoyl)lysine from octanoyl-[acyl-carrier-protein]: step 1/2. Catalyzes the transfer of endogenously produced octanoic acid from octanoyl-acyl-carrier-protein onto the lipoyl domains of lipoate-dependent enzymes. Lipoyl-ACP can also act as a substrate although octanoyl-ACP is likely to be the physiological substrate. The chain is Octanoyltransferase from Coxiella burnetii (strain CbuG_Q212) (Coxiella burnetii (strain Q212)).